Consider the following 159-residue polypeptide: Globin CTT-W (159 aa).

The N-terminal stretch at 1-16 is a signal peptide; sequence MKFLVILTLCIAGAIA. Residues 17–159 form the Globin domain; sequence HCDKAPFIKA…HHAIVYSILE (143 aa). Residues His73 and His108 each coordinate heme b.

This sequence belongs to the globin family.

This chain is Globin CTT-W (CTT-W), found in Chironomus thummi piger (Midge).